We begin with the raw amino-acid sequence, 183 residues long: Adenine phosphoribosyltransferase (183 aa).

The protein belongs to the purine/pyrimidine phosphoribosyltransferase family. Homodimer.

The protein resides in the cytoplasm. The enzyme catalyses AMP + diphosphate = 5-phospho-alpha-D-ribose 1-diphosphate + adenine. Its pathway is purine metabolism; AMP biosynthesis via salvage pathway; AMP from adenine: step 1/1. Its function is as follows. Catalyzes a salvage reaction resulting in the formation of AMP, that is energically less costly than de novo synthesis. This chain is Adenine phosphoribosyltransferase, found in Escherichia coli (strain K12 / MC4100 / BW2952).